Reading from the N-terminus, the 246-residue chain is Sugar fermentation stimulation protein homolog (246 aa).

This sequence belongs to the SfsA family.

This chain is Sugar fermentation stimulation protein homolog, found in Prochlorococcus marinus (strain MIT 9301).